The chain runs to 190 residues: RING finger protein 227 (190 aa).

An RING-type zinc finger spans residues 18–81 (CNICYRPFNL…RRVVTCPFCR (64 aa)). The segment at 111 to 145 (KCERDEAGNPAKESSDADGEAEEEGESEKGAGPRS) is disordered. Over residues 126–136 (DADGEAEEEGE) the composition is skewed to acidic residues.

The polypeptide is RING finger protein 227 (Homo sapiens (Human)).